The following is a 225-amino-acid chain: Cell division protein SepF (225 aa).

Positions 22-116 are disordered; the sequence is EYLDEPEPAR…TRGALAVDTR (95 aa). Composition is skewed to basic and acidic residues over residues 28-54 and 77-86; these read EPAR…RDFA and RYDGPRHSSR.

It belongs to the SepF family. Homodimer. Interacts with FtsZ.

The protein resides in the cytoplasm. Cell division protein that is part of the divisome complex and is recruited early to the Z-ring. Probably stimulates Z-ring formation, perhaps through the cross-linking of FtsZ protofilaments. Its function overlaps with FtsA. The sequence is that of Cell division protein SepF from Rhodococcus jostii (strain RHA1).